A 699-amino-acid polypeptide reads, in one-letter code: Mannan-binding lectin serine protease 1 (699 aa).

Residues 1-19 (MRWLLLYYALCFSLSKASA) form the signal peptide. The CUB 1 domain maps to 20–138 (HTVELNNMFG…TGFDAHYMAV (119 aa)). The homodimerization stretch occupies residues 20-184 (HTVELNNMFG…HTDNRTCRVE (165 aa)). Positions 20 to 184 (HTVELNNMFG…HTDNRTCRVE (165 aa)) are interaction with MBL2. An interaction with FCN2 region spans residues 20 to 278 (HTVELNNMFG…STQSHSVLIL (259 aa)). The N-linked (GlcNAc...) asparagine glycan is linked to N49. 7 residues coordinate Ca(2+): E68, D76, D121, S123, D139, V140, and E142. The cysteines at positions 73 and 91 are disulfide-linked. Residues 139–182 (DVDECKEREDEELSCDHYCHNYIGGYYCSCRFGYILHTDNRTCR) form the EGF-like; calcium-binding domain. Disulfide bonds link C143-C157, C153-C166, C168-C181, and C185-C212. Residues N159, Y160, and G163 each coordinate Ca(2+). N159 is subject to (3R)-3-hydroxyasparagine. A glycan (N-linked (GlcNAc...) (complex) asparagine) is linked at N178. One can recognise a CUB 2 domain in the interval 185-297 (CSDNLFTQRT…RGWRLSYRAA (113 aa)). Residues E235, D245, D282, and S284 each contribute to the Ca(2+) site. C242 and C260 are joined by a disulfide. Sushi domains are found at residues 299–364 (NECP…TCKI) and 365–434 (VDCR…TCLP). 6 disulfide bridges follow: C301-C349, C329-C362, C367-C414, C397-C432, C436-C572, and C475-C491. N385 carries N-linked (GlcNAc...) (complex) asparagine glycosylation. N-linked (GlcNAc...) asparagine glycosylation occurs at N407. The 248-residue stretch at 449–696 (IFNGRPAQKG…NKDWIQRVTG (248 aa)) folds into the Peptidase S1 domain. The Charge relay system role is filled by H490. An N-linked (GlcNAc) asparagine glycan is attached at L533. D552 serves as the catalytic Charge relay system. E599 carries N-linked (GlcNAc) asparagine glycosylation. Intrachain disulfides connect C614/C631 and C642/C672. S646 acts as the Charge relay system in catalysis.

Belongs to the peptidase S1 family. In terms of assembly, homodimer. Interacts with the oligomeric lectins MBL2, FCN2 and FCN3; triggers the lectin pathway of complement through activation of C3. Interacts with SERPING1. Interacts with COLEC11; probably triggers the lectin pathway of complement. Post-translationally, the iron and 2-oxoglutarate dependent 3-hydroxylation of aspartate and asparagine is (R) stereospecific within EGF domains. N-glycosylated. Some N-linked glycan are of the complex-type. In terms of processing, autoproteolytic processing of the proenzyme produces the active enzyme composed on the heavy and the light chain held together by a disulfide bond. Isoform 1 but not isoform 2 is activated through autoproteolytic processing. Protein of the plasma which is primarily expressed by liver.

The protein resides in the secreted. With respect to regulation, inhibited by SERPING1 and A2M. In terms of biological role, functions in the lectin pathway of complement, which performs a key role in innate immunity by recognizing pathogens through patterns of sugar moieties and neutralizing them. The lectin pathway is triggered upon binding of mannan-binding lectin (MBL) and ficolins to sugar moieties which leads to activation of the associated proteases MASP1 and MASP2. Functions as an endopeptidase and may activate MASP2 or C2 or directly activate C3 the key component of complement reaction. Isoform 2 may have an inhibitory effect on the activation of the lectin pathway of complement or may cleave IGFBP5. Also plays a role in development. The protein is Mannan-binding lectin serine protease 1 (MASP1) of Homo sapiens (Human).